The sequence spans 314 residues: Pectin lyase (314 aa).

R202 is a catalytic residue.

Belongs to the polysaccharide lyase 1 family.

The catalysed reaction is Eliminative cleavage of (1-&gt;4)-alpha-D-galacturonan methyl ester to give oligosaccharides with 4-deoxy-6-O-methyl-alpha-D-galact-4-enuronosyl groups at their non-reducing ends.. The chain is Pectin lyase (pnl) from Pectobacterium carotovorum (Erwinia carotovora).